A 327-amino-acid polypeptide reads, in one-letter code: S-adenosylmethionine/S-adenosylhomocysteine transporter (327 aa).

A run of 10 helical transmembrane segments spans residues 22-42 (CDMA…SFAL), 53-73 (LFVT…LLLC), 85-105 (IMPI…LEFI), 114-134 (TACF…YVQL), 143-163 (LGGL…GGSE), 165-185 (VAEW…ATCL), 202-222 (SLSM…LSLI), 240-260 (LFLQ…YNLF), 271-291 (FLSF…WLLL), and 294-314 (SFPP…RLIY). Residues 34-157 (FIWSSSFALS…LGLVSYLVYL (124 aa)) form the EamA 1 domain. Positions 189–313 (GWTLLRKLGR…GFMVLGCRLI (125 aa)) constitute an EamA 2 domain.

The protein belongs to the drug/metabolite transporter (DMT) superfamily. 10 TMS drug/metabolite exporter (DME) (TC 2.A.7.3) family.

It localises to the cell membrane. With respect to regulation, CCCP treatment reduces SAM intracellular uptake by 50%. In terms of biological role, transports S-adenosylmethionine (SAM) and S-adenosylhomocysteine (SAH). Allows bacteria to acquire SAM from the eukaryotic host cell and to likely remove the toxic by-product SAH. In Chlamydia trachomatis serovar L2 (strain ATCC VR-902B / DSM 19102 / 434/Bu), this protein is S-adenosylmethionine/S-adenosylhomocysteine transporter.